We begin with the raw amino-acid sequence, 1455 residues long: Fanconi anemia group A protein (1455 aa).

The short motif at 18-34 (RRRAWAELLAGRVKREK) is the Nuclear localization signal element. Ser1449 is modified (phosphoserine).

As to quaternary structure, belongs to the multisubunit FA complex composed of FANCA, FANCB, FANCC, FANCE, FANCF, FANCG, FANCL/PHF9 and FANCM. The complex is not found in FA patients. In complex with FANCF, FANCG and FANCL, but not with FANCC, nor FANCE, interacts with HES1; this interaction may be essential for the stability and nuclear localization of FA core complex proteins. The complex with FANCC and FANCG may also include EIF2AK2 and HSP70. Interacts with FAAP20/C1orf86; interaction is direct. Phosphorylation is required for the formation of the nuclear complex. Not phosphorylated in cells derived from groups A, B, C, E, F, G, and H.

Its subcellular location is the nucleus. It localises to the cytoplasm. Functionally, DNA repair protein that may operate in a postreplication repair or a cell cycle checkpoint function. May be involved in interstrand DNA cross-link repair and in the maintenance of normal chromosome stability. The protein is Fanconi anemia group A protein (FANCA) of Homo sapiens (Human).